We begin with the raw amino-acid sequence, 276 residues long: Protein canopy homolog 3 (276 aa).

A signal peptide spans 1 to 26 (MESMSELAPRCLLFPLLLLLPLLLLP). The region spanning 47-269 (SKCEVCKYVA…EGVQKASPLP (223 aa)) is the Saposin B-type domain. 3 disulfide bridges follow: cysteine 49–cysteine 206, cysteine 52–cysteine 194, and cysteine 104–cysteine 166. A glycan (N-linked (GlcNAc...) asparagine) is linked at asparagine 153. Positions 153–179 (NETSAEVADLKKQCDVLVEEFEEVIED) form a coiled coil. The disordered stretch occupies residues 218 to 276 (IASLGGKKSKKKRSGVKGSSSGSSKQRKELGGLGEDANAEEEEGVQKASPLPHSPPDEL).

This sequence belongs to the canopy family. Interacts with HSP90B1; this interaction is disrupted in the presence of ATP. Interacts with TLR1, TLR2, TLR4 and TLR9. Strongest interaction with TLR4.

It localises to the endoplasmic reticulum. Toll-like receptor (TLR)-specific co-chaperone for HSP90B1. Required for proper TLR folding, except that of TLR3, and hence controls TLR exit from the endoplasmic reticulum. Consequently, required for both innate and adaptive immune responses. This chain is Protein canopy homolog 3 (Cnpy3), found in Mus musculus (Mouse).